Here is a 207-residue protein sequence, read N- to C-terminus: Small ribosomal subunit protein uS4 (207 aa).

One can recognise an S4 RNA-binding domain in the interval 96-156 (SRLDNTVYRM…KKSHKQSRIR (61 aa)).

The protein belongs to the universal ribosomal protein uS4 family. As to quaternary structure, part of the 30S ribosomal subunit. Contacts protein S5. The interaction surface between S4 and S5 is involved in control of translational fidelity.

Functionally, one of the primary rRNA binding proteins, it binds directly to 16S rRNA where it nucleates assembly of the body of the 30S subunit. Its function is as follows. With S5 and S12 plays an important role in translational accuracy. In Blochmanniella pennsylvanica (strain BPEN), this protein is Small ribosomal subunit protein uS4.